The primary structure comprises 193 residues: Peptidyl-tRNA hydrolase (193 aa).

Tyr17 contributes to the tRNA binding site. The Proton acceptor role is filled by His22. Positions 68, 70, and 116 each coordinate tRNA.

The protein belongs to the PTH family. As to quaternary structure, monomer.

The protein resides in the cytoplasm. It carries out the reaction an N-acyl-L-alpha-aminoacyl-tRNA + H2O = an N-acyl-L-amino acid + a tRNA + H(+). Hydrolyzes ribosome-free peptidyl-tRNAs (with 1 or more amino acids incorporated), which drop off the ribosome during protein synthesis, or as a result of ribosome stalling. In terms of biological role, catalyzes the release of premature peptidyl moieties from peptidyl-tRNA molecules trapped in stalled 50S ribosomal subunits, and thus maintains levels of free tRNAs and 50S ribosomes. The sequence is that of Peptidyl-tRNA hydrolase from Chromobacterium violaceum (strain ATCC 12472 / DSM 30191 / JCM 1249 / CCUG 213 / NBRC 12614 / NCIMB 9131 / NCTC 9757 / MK).